The following is an 894-amino-acid chain: ABC-transporter-regulating transcription factor (894 aa).

A DNA-binding region (zn(2)-C6 fungal-type) is located at residues 71 to 98 (CDMCRKKKIKCDGKMPKCSHCINYRTDC). Residues 159–174 (NTALNSLKSPTNKFNG) show a composition bias toward polar residues. Positions 159–219 (NTALNSLKSP…PKESETEVEG (61 aa)) are disordered. Positions 175–189 (SSATSQSQHTTASRH) are enriched in low complexity. Positions 199–210 (SPHTAATSPNSP) are enriched in polar residues. The chain crosses the membrane as a helical span at residues 649–669 (CVWLILYYPVSALVTLFANIL). Positions 724–797 (AEKESHSKKK…MSNPTRAFAP (74 aa)) are disordered. The span at 736–750 (AAPDEPQDLRQKTPD) shows a compositional bias: basic and acidic residues. Polar residues-rich tracts occupy residues 751–761 (ENSVPSPSTKR) and 771–792 (LFPS…SNPT).

It is found in the nucleus. It localises to the membrane. Functionally, transcription factor that regulates expression of the genes related to resistance to azole compounds. The protein is ABC-transporter-regulating transcription factor of Aspergillus oryzae (strain ATCC 42149 / RIB 40) (Yellow koji mold).